A 201-amino-acid chain; its full sequence is Ribonuclease HII (201 aa).

Residues 15 to 201 form the RNase H type-2 domain; the sequence is QRVAGVDEVG…FRPVRRFLEA (187 aa). Aspartate 21, glutamate 22, and aspartate 113 together coordinate a divalent metal cation.

The protein belongs to the RNase HII family. Requires Mn(2+) as cofactor. It depends on Mg(2+) as a cofactor.

The protein localises to the cytoplasm. The catalysed reaction is Endonucleolytic cleavage to 5'-phosphomonoester.. In terms of biological role, endonuclease that specifically degrades the RNA of RNA-DNA hybrids. In Nitrosococcus oceani (strain ATCC 19707 / BCRC 17464 / JCM 30415 / NCIMB 11848 / C-107), this protein is Ribonuclease HII.